We begin with the raw amino-acid sequence, 370 residues long: tRNA-specific 2-thiouridylase MnmA (370 aa).

ATP contacts are provided by residues 14–21 (GMSGGVDS) and Met40. An interaction with target base in tRNA region spans residues 100–102 (NPD). The Nucleophile role is filled by Cys105. Residues Cys105 and Cys205 are joined by a disulfide bond. Residue Gly129 participates in ATP binding. Residues 155-157 (KDQ) form an interaction with tRNA region. The active-site Cysteine persulfide intermediate is Cys205. The interaction with tRNA stretch occupies residues 321-322 (RY).

This sequence belongs to the MnmA/TRMU family.

It is found in the cytoplasm. The enzyme catalyses S-sulfanyl-L-cysteinyl-[protein] + uridine(34) in tRNA + AH2 + ATP = 2-thiouridine(34) in tRNA + L-cysteinyl-[protein] + A + AMP + diphosphate + H(+). Functionally, catalyzes the 2-thiolation of uridine at the wobble position (U34) of tRNA, leading to the formation of s(2)U34. In Bordetella avium (strain 197N), this protein is tRNA-specific 2-thiouridylase MnmA.